The following is a 276-amino-acid chain: Ribosomal RNA small subunit methyltransferase A (276 aa).

S-adenosyl-L-methionine is bound by residues Asn-27, Leu-29, Gly-54, Glu-75, Asp-101, and Asn-123.

It belongs to the class I-like SAM-binding methyltransferase superfamily. rRNA adenine N(6)-methyltransferase family. RsmA subfamily.

The protein localises to the cytoplasm. The catalysed reaction is adenosine(1518)/adenosine(1519) in 16S rRNA + 4 S-adenosyl-L-methionine = N(6)-dimethyladenosine(1518)/N(6)-dimethyladenosine(1519) in 16S rRNA + 4 S-adenosyl-L-homocysteine + 4 H(+). In terms of biological role, specifically dimethylates two adjacent adenosines (A1518 and A1519) in the loop of a conserved hairpin near the 3'-end of 16S rRNA in the 30S particle. May play a critical role in biogenesis of 30S subunits. The chain is Ribosomal RNA small subunit methyltransferase A from Bartonella quintana (strain Toulouse) (Rochalimaea quintana).